The primary structure comprises 101 residues: Large ribosomal subunit protein uL23 (101 aa).

The protein belongs to the universal ribosomal protein uL23 family. As to quaternary structure, part of the 50S ribosomal subunit. Contacts protein L29, and trigger factor when it is bound to the ribosome.

Functionally, one of the early assembly proteins it binds 23S rRNA. One of the proteins that surrounds the polypeptide exit tunnel on the outside of the ribosome. Forms the main docking site for trigger factor binding to the ribosome. The polypeptide is Large ribosomal subunit protein uL23 (Haemophilus ducreyi (strain 35000HP / ATCC 700724)).